We begin with the raw amino-acid sequence, 337 residues long: Glyceraldehyde-3-phosphate dehydrogenase (337 aa).

NAD(+) contacts are provided by residues 12 to 13 (RI), D34, and R79. D-glyceraldehyde 3-phosphate-binding positions include 150 to 152 (SCT), T181, 210 to 211 (TG), and R233. C151 (nucleophile) is an active-site residue. N315 is a binding site for NAD(+).

This sequence belongs to the glyceraldehyde-3-phosphate dehydrogenase family. In terms of assembly, homotetramer.

The protein localises to the cytoplasm. It catalyses the reaction D-glyceraldehyde 3-phosphate + phosphate + NAD(+) = (2R)-3-phospho-glyceroyl phosphate + NADH + H(+). It participates in carbohydrate degradation; glycolysis; pyruvate from D-glyceraldehyde 3-phosphate: step 1/5. The sequence is that of Glyceraldehyde-3-phosphate dehydrogenase (GPD-1) from Claviceps purpurea (strain 20.1) (Ergot fungus).